Consider the following 397-residue polypeptide: uncharacterized protein (397 aa).

Helical transmembrane passes span Trp-142–Ala-162, Ser-191–Leu-211, Ala-242–Leu-258, and Ala-260–Phe-280.

This sequence belongs to the cation diffusion facilitator (CDF) transporter (TC 2.A.4) family. SLC30A subfamily.

It localises to the membrane. This is an uncharacterized protein from Schizosaccharomyces pombe (strain 972 / ATCC 24843) (Fission yeast).